We begin with the raw amino-acid sequence, 417 residues long: Delta-aminolevulinic acid dehydratase, chloroplastic (417 aa).

Residues Met-1–Thr-40 constitute a chloroplast transit peptide. Residues Val-63–Leu-92 form a disordered region. Residue Lys-286 is the Schiff-base intermediate with substrate of the active site. 5-aminolevulinate is bound by residues Arg-296 and Lys-308. Glu-324 is a Mg(2+) binding site. Lys-339 (schiff-base intermediate with substrate) is an active-site residue. 2 residues coordinate 5-aminolevulinate: Ser-365 and Tyr-404.

It belongs to the ALAD family. In terms of assembly, homooctamer. The cofactor is Mg(2+).

The protein resides in the plastid. It localises to the chloroplast. It catalyses the reaction 2 5-aminolevulinate = porphobilinogen + 2 H2O + H(+). It participates in porphyrin-containing compound metabolism; protoporphyrin-IX biosynthesis; coproporphyrinogen-III from 5-aminolevulinate: step 1/4. Catalyzes an early step in the biosynthesis of tetrapyrroles. Binds two molecules of 5-aminolevulinate per subunit, each at a distinct site, and catalyzes their condensation to form porphobilinogen. The chain is Delta-aminolevulinic acid dehydratase, chloroplastic (HEMB) from Selaginella martensii (Martens's spike moss).